The primary structure comprises 326 residues: MLKTYHIALACVILAVVVLLFGGESLSLEEWQEVCLNVKNHFLHNEELSSLSVIILEIRLPRVILALLVGASLSGSGVVMQTILRNPLVDPFLLGISSGAMLGVAMAIAVVESNIAILAFFGAILPSLAVLAMNRVLGNSVLSLVLSGVVLSAFLSALAGAIKFFVIPQKAQAIVVWLLGSLSLSSYKDCLIAFIGLSLGFIPLFLLRWRINLLSLSDAQSLSLGINPVLLRSLCLVCVSVASALAVSVSGTIGWIGLVIPHVARLFFGANLQKLLLSSLLMGAFFLLLADVVAKTITPYDLPVGIATSVLGAPFFLWLLFRTRGV.

The next 10 helical transmembrane spans lie at isoleucine 7–serine 27, isoleucine 64–leucine 84, proline 91–valine 111, serine 113–methionine 133, leucine 142–isoleucine 162, phenylalanine 164–leucine 184, tyrosine 187–leucine 207, valine 241–proline 261, leucine 275–lysine 295, and aspartate 301–phenylalanine 321.

Belongs to the binding-protein-dependent transport system permease family. FecCD subfamily.

Its subcellular location is the cell inner membrane. In terms of biological role, part of a binding-protein-dependent transport system for an iron chelatin; probably responsible for the translocation of the substrate across the membrane. In Helicobacter pylori (strain J99 / ATCC 700824) (Campylobacter pylori J99), this protein is Probable iron chelatin transport system permease protein jhp_0822.